The chain runs to 166 residues: NADH-quinone oxidoreductase subunit I (166 aa).

2 4Fe-4S ferredoxin-type domains span residues 57 to 87 (LRRY…IESE) and 97 to 126 (TRYD…VTPI). Residues Cys-67, Cys-70, Cys-73, Cys-77, Cys-106, Cys-109, Cys-112, and Cys-116 each coordinate [4Fe-4S] cluster.

Belongs to the complex I 23 kDa subunit family. As to quaternary structure, NDH-1 is composed of 14 different subunits. Subunits NuoA, H, J, K, L, M, N constitute the membrane sector of the complex. [4Fe-4S] cluster is required as a cofactor.

It is found in the cell inner membrane. It carries out the reaction a quinone + NADH + 5 H(+)(in) = a quinol + NAD(+) + 4 H(+)(out). NDH-1 shuttles electrons from NADH, via FMN and iron-sulfur (Fe-S) centers, to quinones in the respiratory chain. The immediate electron acceptor for the enzyme in this species is believed to be ubiquinone. Couples the redox reaction to proton translocation (for every two electrons transferred, four hydrogen ions are translocated across the cytoplasmic membrane), and thus conserves the redox energy in a proton gradient. This Legionella pneumophila (strain Paris) protein is NADH-quinone oxidoreductase subunit I.